Reading from the N-terminus, the 218-residue chain is Peptide methionine sulfoxide reductase MsrA (218 aa).

Residue Cys-57 is part of the active site.

It belongs to the MsrA Met sulfoxide reductase family.

The catalysed reaction is L-methionyl-[protein] + [thioredoxin]-disulfide + H2O = L-methionyl-(S)-S-oxide-[protein] + [thioredoxin]-dithiol. It carries out the reaction [thioredoxin]-disulfide + L-methionine + H2O = L-methionine (S)-S-oxide + [thioredoxin]-dithiol. Functionally, has an important function as a repair enzyme for proteins that have been inactivated by oxidation. Catalyzes the reversible oxidation-reduction of methionine sulfoxide in proteins to methionine. The protein is Peptide methionine sulfoxide reductase MsrA of Brucella melitensis biotype 1 (strain ATCC 23456 / CCUG 17765 / NCTC 10094 / 16M).